The primary structure comprises 539 residues: MPENVAPRSGATAGAAGGRGKGAYQDRDKPAQIRFSNISAAKAVADAIRTSLGPKGMDKMIQDGKGDVTITNDGATILKQMQVLHPAARMLVELSKAQDIEAGDGTTSVVIIAGSLLDSCTKLLQKGIHPTIISESFQKALEKGIEILTDMSRPVELSDRETLLNSATTSLNSKVVSQYSSLLSPMSVNAVMKVIDPATATSVDLRDIKIVKKLGGTIDDCELVEGLVLTQKVSNSGITRVEKAKIGLIQFCLSAPKTDMDNQIVVSDYAQMDRVLREERAYILNLVKQIKKTGCNVLLIQKSILRDALSDLALHFLNKMKIMVIKDIEREDIEFICKTIGTKPVAHIDQFTADMLGSAELAEEVNLNGSGKLLKITGCASPGKTVTIVVRGSNKLVIEEAERSIHDALCVIRCLVKKRALIAGGGAPEIELALRLTEYSRTLSGMESYCVRAFADAMEVIPSTLAENAGLNPISTVTELRNRHAQGEKTAGINVRKGGISNILEELVVQPLLVSVSALTLATETVRSILKIDDVVNTR.

The tract at residues 1 to 29 is disordered; sequence MPENVAPRSGATAGAAGGRGKGAYQDRDK. Arginine 19 bears the Omega-N-methylarginine mark. Lysine 21 bears the N6-acetyllysine mark. The residue at position 36 (serine 36) is a Phosphoserine. Glycine 53 contacts ADP. Position 53 (glycine 53) interacts with ATP. Residue aspartate 104 participates in Mg(2+) binding. 7 residues coordinate ADP: glycine 105, threonine 106, threonine 107, serine 108, asparagine 172, serine 173, and lysine 174. 2 residues coordinate ATP: glycine 105 and threonine 106. Residue lysine 174 coordinates ATP. A phosphoserine mark is found at serine 184 and serine 202. Lysine 288, lysine 302, lysine 319, and lysine 326 each carry N6-acetyllysine. Glycine 425 provides a ligand contact to ADP. Residue serine 444 is modified to Phosphoserine. Glutamine 510 contacts ADP.

The protein belongs to the TCP-1 chaperonin family. As to quaternary structure, component of the chaperonin-containing T-complex (TRiC), a hexadecamer composed of two identical back-to-back stacked rings enclosing a protein folding chamber. Each ring is made up of eight different subunits: TCP1/CCT1, CCT2, CCT3, CCT4, CCT5, CCT6A/CCT6, CCT7, CCT8. Interacts with PACRG. Interacts with DNAAF4. Interacts with DLEC1.

It is found in the cytoplasm. It localises to the melanosome. The protein localises to the cytoskeleton. The protein resides in the microtubule organizing center. Its subcellular location is the centrosome. It is found in the cilium basal body. The catalysed reaction is ATP + H2O = ADP + phosphate + H(+). Its function is as follows. Component of the chaperonin-containing T-complex (TRiC), a molecular chaperone complex that assists the folding of actin, tubulin and other proteins upon ATP hydrolysis. The TRiC complex mediates the folding of WRAP53/TCAB1, thereby regulating telomere maintenance. As part of the TRiC complex may play a role in the assembly of BBSome, a complex involved in ciliogenesis regulating transports vesicles to the cilia. This Homo sapiens (Human) protein is T-complex protein 1 subunit delta (CCT4).